The following is a 455-amino-acid chain: Transmembrane protease serine 5 (455 aa).

Topologically, residues Met-1–Cys-49 are cytoplasmic. Residues Val-50–Leu-70 traverse the membrane as a helical; Signal-anchor for type II membrane protein segment. The Extracellular segment spans residues Tyr-71–Arg-455. The SRCR domain occupies Phe-112–Ser-207. 7 disulfides stabilise this stretch: Cys-135-Cys-196, Cys-148-Cys-206, Cys-209-Cys-328, Cys-243-Cys-259, Cys-342-Cys-411, Cys-374-Cys-390, and Cys-401-Cys-429. Asn-163 and Asn-170 each carry an N-linked (GlcNAc...) asparagine glycan. One can recognise a Peptidase S1 domain in the interval Ile-218 to Gln-453. Active-site charge relay system residues include His-258 and Asp-308. N-linked (GlcNAc...) asparagine glycans are attached at residues Asn-319 and Asn-375. Catalysis depends on Ser-405, which acts as the Charge relay system.

Belongs to the peptidase S1 family.

The protein resides in the cell membrane. Functionally, may play a role in hearing. The polypeptide is Transmembrane protease serine 5 (Tmprss5) (Mus musculus (Mouse)).